A 307-amino-acid chain; its full sequence is Agmatinase (307 aa).

Residues His-128, Asp-151, His-153, Asp-155, Asp-232, and Asp-234 each contribute to the Mn(2+) site.

This sequence belongs to the arginase family. Agmatinase subfamily. The cofactor is Mn(2+).

It carries out the reaction agmatine + H2O = urea + putrescine. Its pathway is amine and polyamine biosynthesis; putrescine biosynthesis via agmatine pathway; putrescine from agmatine: step 1/1. Functionally, catalyzes the formation of putrescine from agmatine. This Neisseria gonorrhoeae (strain ATCC 700825 / FA 1090) protein is Agmatinase.